The following is a 674-amino-acid chain: DNA ligase (674 aa).

NAD(+) is bound by residues 35-39 (DYDFD), 84-85 (SL), and Glu118. The active-site N6-AMP-lysine intermediate is the Lys120. Residues Arg141, Glu184, Lys297, and Lys321 each coordinate NAD(+). The Zn(2+) site is built by Cys415, Cys418, Cys433, and Cys439. The region spanning 598 to 674 (LVNTNFEGLT…ITEDEFDALL (77 aa)) is the BRCT domain.

It belongs to the NAD-dependent DNA ligase family. LigA subfamily. The cofactor is Mg(2+). Mn(2+) serves as cofactor.

The enzyme catalyses NAD(+) + (deoxyribonucleotide)n-3'-hydroxyl + 5'-phospho-(deoxyribonucleotide)m = (deoxyribonucleotide)n+m + AMP + beta-nicotinamide D-nucleotide.. DNA ligase that catalyzes the formation of phosphodiester linkages between 5'-phosphoryl and 3'-hydroxyl groups in double-stranded DNA using NAD as a coenzyme and as the energy source for the reaction. It is essential for DNA replication and repair of damaged DNA. This chain is DNA ligase, found in Chlorobium phaeovibrioides (strain DSM 265 / 1930) (Prosthecochloris vibrioformis (strain DSM 265)).